We begin with the raw amino-acid sequence, 83 residues long: Small ribosomal subunit protein uS17 (83 aa).

It belongs to the universal ribosomal protein uS17 family. As to quaternary structure, part of the 30S ribosomal subunit.

In terms of biological role, one of the primary rRNA binding proteins, it binds specifically to the 5'-end of 16S ribosomal RNA. In Chlamydia muridarum (strain MoPn / Nigg), this protein is Small ribosomal subunit protein uS17.